A 314-amino-acid polypeptide reads, in one-letter code: Olfactory receptor 1E1 (314 aa).

At 1-25 (MMGQNQTSISDFLLLGLPIQPEQQN) the chain is on the extracellular side. Asn-5 is a glycosylation site (N-linked (GlcNAc...) asparagine). Residues 26–49 (LCYALFLAMYLTTLLGNLLIIVLI) form a helical membrane-spanning segment. At 50–57 (RLDSHLHT) the chain is on the cytoplasmic side. The helical transmembrane segment at 58–79 (PMYLFLSNLSFSDLCFSSVTIP) threads the bilayer. The Extracellular segment spans residues 80–100 (KLLQNMQNQDPSIPYADCLTQ). The helical transmembrane segment at 101-120 (MYFFLLFGDLESFLLVAMAY) threads the bilayer. Residues 121 to 139 (DRYVAICFPLHYTAIMSPM) are Cytoplasmic-facing. Residues 140–158 (LCLALVALSWVLTTFHAML) form a helical membrane-spanning segment. At 159–195 (HTLLMARLCFCADNVIPHFFCDMSALLKLAFSDTRVN) the chain is on the extracellular side. The chain crosses the membrane as a helical span at residues 196–219 (EWVIFIMGGLILVIPFLLILGSYA). At 220–236 (RIVSSILKVPSSKGICK) the chain is on the cytoplasmic side. A helical membrane pass occupies residues 237–259 (AFSTCGSHLSVVSLFYGTVIGLY). Residues 260 to 272 (LCSSANSSTLKDT) lie on the Extracellular side of the membrane. A helical membrane pass occupies residues 273-292 (VMAMMYTVVTPMLNPFIYSL). At 293–314 (RNRDMKGALSRVIHQKKTFFSL) the chain is on the cytoplasmic side.

It belongs to the G-protein coupled receptor 1 family.

Its subcellular location is the cell membrane. Its function is as follows. Odorant receptor. The chain is Olfactory receptor 1E1 (OR1E1) from Homo sapiens (Human).